The following is a 362-amino-acid chain: Vignain (362 aa).

Positions 1–20 (MATKKLLWVVLSFSLVLGVA) are cleaved as a signal peptide. A propeptide spans 21–131 (NSFDFHDKDL…YEKVVSVPPS (111 aa)) (activation peptide). 3 disulfide bridges follow: cysteine 149–cysteine 191, cysteine 183–cysteine 224, and cysteine 282–cysteine 334. Cysteine 152 is an active-site residue. Catalysis depends on residues histidine 288 and asparagine 309. Asparagine 326 and asparagine 346 each carry an N-linked (GlcNAc...) asparagine glycan. The Prevents secretion from ER motif lies at 359–362 (KDEL).

Belongs to the peptidase C1 family. Monomer.

The protein resides in the endoplasmic reticulum lumen. Functionally, thought to be involved in the hydrolysis of stored seed proteins. This chain is Vignain, found in Phaseolus vulgaris (Kidney bean).